The chain runs to 738 residues: Flagellar radial spoke protein 2 (738 aa).

The residue at position 104 (arginine 104) is an Asymmetric dimethylarginine. 2 stretches are compositionally biased toward acidic residues: residues 134-153 and 161-182; these read PDWVAPEDDEAAAVETEDEA and EGEEPPPEPEPEPEAAPEDGEG. The segment at 134 to 189 is disordered; it reads PDWVAPEDDEAAAVETEDEAAGGAALAEGEEPPPEPEPEPEAAPEDGEGDAPAPKI. At arginine 260 the chain carries Asymmetric dimethylarginine. The segment at 357-426 is disordered; it reads AAAEAAAAAP…PPKPKKKKKV (70 aa). Acidic residues predominate over residues 371 to 415; sequence EGEEGEGEAPPAEEEPPAEEEAEEEEEEAEEGAEEGAEEGEEGEE. An asymmetric dimethylarginine mark is found at arginine 453, arginine 538, and arginine 615. A disordered region spans residues 674–738; that stretch reads AEAGEGEAVA…SSEESKAAAE (65 aa). The span at 689-730 shows a compositional bias: low complexity; sequence PAEAEAAPAEGEAAPPAEGEGEAQPAQEGSNSSSSSSDSSSS.

This sequence belongs to the dpy-30 family. Post-translationally, asymmetrically dimethylated at Arg-104, Arg-260, Arg-453, Arg-538 and Arg-615 during flagellum resorption. Probably methylated by PRMT1.

It localises to the cytoplasm. The protein resides in the cytoskeleton. It is found in the flagellum axoneme. Flagellar radial spokes contribute to the regulation of dynein arm activity and thus the pattern of flagellar bending. They consist of a thin stalk, which is attached to the a subfiber of the outer doublet microtubule, and a bulbous head, which is attached to the stalk and appears to interact with the projections from the central pair of microtubules. Binds calmodulin in a calcium-dependent manner. This chain is Flagellar radial spoke protein 2, found in Chlamydomonas reinhardtii (Chlamydomonas smithii).